Reading from the N-terminus, the 182-residue chain is ATP synthase subunit delta (182 aa).

It belongs to the ATPase delta chain family. F-type ATPases have 2 components, F(1) - the catalytic core - and F(0) - the membrane proton channel. F(1) has five subunits: alpha(3), beta(3), gamma(1), delta(1), epsilon(1). F(0) has three main subunits: a(1), b(2) and c(10-14). The alpha and beta chains form an alternating ring which encloses part of the gamma chain. F(1) is attached to F(0) by a central stalk formed by the gamma and epsilon chains, while a peripheral stalk is formed by the delta and b chains.

The protein resides in the cell membrane. Functionally, f(1)F(0) ATP synthase produces ATP from ADP in the presence of a proton or sodium gradient. F-type ATPases consist of two structural domains, F(1) containing the extramembraneous catalytic core and F(0) containing the membrane proton channel, linked together by a central stalk and a peripheral stalk. During catalysis, ATP synthesis in the catalytic domain of F(1) is coupled via a rotary mechanism of the central stalk subunits to proton translocation. This protein is part of the stalk that links CF(0) to CF(1). It either transmits conformational changes from CF(0) to CF(1) or is implicated in proton conduction. This is ATP synthase subunit delta from Lachnoclostridium phytofermentans (strain ATCC 700394 / DSM 18823 / ISDg) (Clostridium phytofermentans).